We begin with the raw amino-acid sequence, 32 residues long: MSDIN-like toxin proprotein 11 (32 aa).

A propeptide spanning residues 1–10 (MSDINATRLP) is cleaved from the precursor. The segment at 1-32 (MSDINATRLPGMEPPSPMPCVGDADNFTLTRG) is disordered. Residues 11–19 (GMEPPSPMP) constitute a cross-link (cyclopeptide (Gly-Pro)). Positions 20 to 32 (CVGDADNFTLTRG) are excised as a propeptide.

The protein belongs to the MSDIN fungal toxin family. Post-translationally, processed by the macrocyclase-peptidase enzyme POPB to yield a toxic cyclic nonapeptide. POPB first removes 10 residues from the N-terminus. Conformational trapping of the remaining peptide forces the enzyme to release this intermediate rather than proceed to macrocyclization. The enzyme rebinds the remaining peptide in a different conformation and catalyzes macrocyclization of the N-terminal 9 residues.

In terms of biological role, probable toxin that belongs to the MSDIN-like toxin family responsible for a large number of food poisoning cases and deaths. The sequence is that of MSDIN-like toxin proprotein 11 from Amanita bisporigera (Destroying angel).